We begin with the raw amino-acid sequence, 480 residues long: Glutamyl-tRNA(Gln) amidotransferase subunit A (480 aa).

Catalysis depends on charge relay system residues K76 and S151. S175 serves as the catalytic Acyl-ester intermediate.

Belongs to the amidase family. GatA subfamily. Heterotrimer of A, B and C subunits.

It carries out the reaction L-glutamyl-tRNA(Gln) + L-glutamine + ATP + H2O = L-glutaminyl-tRNA(Gln) + L-glutamate + ADP + phosphate + H(+). In terms of biological role, allows the formation of correctly charged Gln-tRNA(Gln) through the transamidation of misacylated Glu-tRNA(Gln) in organisms which lack glutaminyl-tRNA synthetase. The reaction takes place in the presence of glutamine and ATP through an activated gamma-phospho-Glu-tRNA(Gln). The protein is Glutamyl-tRNA(Gln) amidotransferase subunit A of Exiguobacterium sp. (strain ATCC BAA-1283 / AT1b).